Consider the following 120-residue polypeptide: MFLLYEYDIFWAFLIISSAIPILAFLISGVLAPINKGPEKLSSYESGIEPMGDAWLQFRIRYYMFALVFVVFDVETVFLYPWAMSFDVLGVSVFIEALIFVLILIVGSVYAWRKGALEWS.

The next 3 membrane-spanning stretches (helical) occupy residues 9 to 29 (IFWA…LISG), 64 to 84 (MFAL…PWAM), and 88 to 108 (VLGV…IVGS).

Belongs to the complex I subunit 3 family. As to quaternary structure, NDH is composed of at least 16 different subunits, 5 of which are encoded in the nucleus.

It is found in the plastid. The protein resides in the chloroplast thylakoid membrane. It catalyses the reaction a plastoquinone + NADH + (n+1) H(+)(in) = a plastoquinol + NAD(+) + n H(+)(out). The catalysed reaction is a plastoquinone + NADPH + (n+1) H(+)(in) = a plastoquinol + NADP(+) + n H(+)(out). NDH shuttles electrons from NAD(P)H:plastoquinone, via FMN and iron-sulfur (Fe-S) centers, to quinones in the photosynthetic chain and possibly in a chloroplast respiratory chain. The immediate electron acceptor for the enzyme in this species is believed to be plastoquinone. Couples the redox reaction to proton translocation, and thus conserves the redox energy in a proton gradient. The sequence is that of NAD(P)H-quinone oxidoreductase subunit 3, chloroplastic from Carica papaya (Papaya).